Consider the following 230-residue polypeptide: Sugar fermentation stimulation protein homolog (230 aa).

The protein belongs to the SfsA family.

The chain is Sugar fermentation stimulation protein homolog from Clostridium kluyveri (strain NBRC 12016).